We begin with the raw amino-acid sequence, 380 residues long: Putative 8-amino-7-oxononanoate synthase (380 aa).

Arginine 22 lines the substrate pocket. Residue 109-110 (GY) coordinates pyridoxal 5'-phosphate. Histidine 134 contributes to the substrate binding site. Pyridoxal 5'-phosphate-binding positions include serine 182, 207 to 210 (DEAH), and 238 to 241 (TLSK). Residue lysine 241 is modified to N6-(pyridoxal phosphate)lysine. Threonine 353 lines the substrate pocket.

The protein belongs to the class-II pyridoxal-phosphate-dependent aminotransferase family. BioF subfamily. Homodimer. The cofactor is pyridoxal 5'-phosphate.

It carries out the reaction 6-carboxyhexanoyl-[ACP] + L-alanine + H(+) = (8S)-8-amino-7-oxononanoate + holo-[ACP] + CO2. Its pathway is cofactor biosynthesis; biotin biosynthesis. In terms of biological role, catalyzes the decarboxylative condensation of pimeloyl-[acyl-carrier protein] and L-alanine to produce 8-amino-7-oxononanoate (AON), [acyl-carrier protein], and carbon dioxide. The polypeptide is Putative 8-amino-7-oxononanoate synthase (bioF) (Gloeothece citriformis (strain PCC 7424) (Cyanothece sp. (strain PCC 7424))).